A 448-amino-acid chain; its full sequence is Ribosomal protein uS12 methylthiotransferase RimO (448 aa).

An MTTase N-terminal domain is found at 10–120; it reads PNIGFVSLGC…VMEHVHKYVP (111 aa). Residues cysteine 19, cysteine 55, cysteine 84, cysteine 152, cysteine 156, and cysteine 159 each coordinate [4Fe-4S] cluster. In terms of domain architecture, Radical SAM core spans 138 to 379; it reads LTPKHYAYLK…MELQQQISAQ (242 aa). The 67-residue stretch at 382–448 folds into the TRAM domain; it reads QQKIGKTLPV…ADEYDLWGTC (67 aa).

The protein belongs to the methylthiotransferase family. RimO subfamily. [4Fe-4S] cluster is required as a cofactor.

It is found in the cytoplasm. It catalyses the reaction L-aspartate(89)-[ribosomal protein uS12]-hydrogen + (sulfur carrier)-SH + AH2 + 2 S-adenosyl-L-methionine = 3-methylsulfanyl-L-aspartate(89)-[ribosomal protein uS12]-hydrogen + (sulfur carrier)-H + 5'-deoxyadenosine + L-methionine + A + S-adenosyl-L-homocysteine + 2 H(+). Functionally, catalyzes the methylthiolation of an aspartic acid residue of ribosomal protein uS12. This is Ribosomal protein uS12 methylthiotransferase RimO from Mannheimia succiniciproducens (strain KCTC 0769BP / MBEL55E).